The primary structure comprises 184 residues: NADH-quinone oxidoreductase subunit B 1 (184 aa).

4 residues coordinate [4Fe-4S] cluster: Cys-37, Cys-38, Cys-103, and Cys-132.

Belongs to the complex I 20 kDa subunit family. In terms of assembly, NDH-1 is composed of 14 different subunits. Subunits NuoB, C, D, E, F, and G constitute the peripheral sector of the complex. Requires [4Fe-4S] cluster as cofactor.

It localises to the cell membrane. It carries out the reaction a quinone + NADH + 5 H(+)(in) = a quinol + NAD(+) + 4 H(+)(out). Functionally, NDH-1 shuttles electrons from NADH, via FMN and iron-sulfur (Fe-S) centers, to quinones in the respiratory chain. The immediate electron acceptor for the enzyme in this species is believed to be a menaquinone. Couples the redox reaction to proton translocation (for every two electrons transferred, four hydrogen ions are translocated across the cytoplasmic membrane), and thus conserves the redox energy in a proton gradient. In Streptomyces griseus subsp. griseus (strain JCM 4626 / CBS 651.72 / NBRC 13350 / KCC S-0626 / ISP 5235), this protein is NADH-quinone oxidoreductase subunit B 1.